Here is a 428-residue protein sequence, read N- to C-terminus: Sulfite exporter TauE/SafE family protein 6 (428 aa).

A run of 11 helical transmembrane segments spans residues 1 to 21 (MKTLFVLFILILCVFAINANQ), 61 to 81 (ALVVAGVLCFTAALISSASGI), 82 to 102 (GDGFFFIPIMNLVAGIDLKAA), 105 to 125 (FSAFMVTGGSIANLINNHFGC), 128 to 148 (LIDYDLALLLEPCMLLGVSVG), 149 to 169 (VICNKVFPEWLITGLFVVFLM), 245 to 265 (YWILLSLQIPLALVFTILALS), 294 to 314 (VMSFLAGLLGGIFGIGGGMII), 332 to 352 (TSFMVFFSATMSGVQYLLLGM), 356 to 376 (EAAYVFSVICFFASTLGLVFA), and 388 to 408 (IIVFLVGTMMYLTTIVMASFG).

It belongs to the 4-toluene sulfonate uptake permease (TSUP) (TC 2.A.102) family.

The protein resides in the membrane. This Arabidopsis thaliana (Mouse-ear cress) protein is Sulfite exporter TauE/SafE family protein 6.